Here is a 229-residue protein sequence, read N- to C-terminus: Potassium/proton antiporter CemA (229 aa).

The next 2 helical transmembrane spans lie at 7–27 (FTPL…SFSV) and 107–127 (ILHF…SILG).

This sequence belongs to the CemA family.

Its subcellular location is the plastid. The protein localises to the chloroplast inner membrane. The catalysed reaction is K(+)(in) + H(+)(out) = K(+)(out) + H(+)(in). Functionally, contributes to K(+)/H(+) antiport activity by supporting proton efflux to control proton extrusion and homeostasis in chloroplasts in a light-dependent manner to modulate photosynthesis. Prevents excessive induction of non-photochemical quenching (NPQ) under continuous-light conditions. Indirectly promotes efficient inorganic carbon uptake into chloroplasts. The polypeptide is Potassium/proton antiporter CemA (Solanum tuberosum (Potato)).